A 169-amino-acid chain; its full sequence is MTVANRRIAVYPGTFDPITNGHIDLVSRAAPLFEKVVVGVAQSPSKGPALPLEQRVQLARGALGHHGNVEVIGFDTLLAHFVRSVQGGVLLRGLRAVSDFEYEFQMASMNRHLIPEVETLFLTPAEQHSFISSSLVREIARLGGDVSGFVPAAVLEALRKVREAKAAQS.

Residue threonine 14 participates in substrate binding. ATP contacts are provided by residues 14-15 (TF) and histidine 22. The substrate site is built by lysine 46, leucine 78, and arginine 92. Residues 93–95 (GLR), glutamate 103, and 128–134 (HSFISSS) contribute to the ATP site.

It belongs to the bacterial CoaD family. Homohexamer. Requires Mg(2+) as cofactor.

The protein localises to the cytoplasm. It catalyses the reaction (R)-4'-phosphopantetheine + ATP + H(+) = 3'-dephospho-CoA + diphosphate. It functions in the pathway cofactor biosynthesis; coenzyme A biosynthesis; CoA from (R)-pantothenate: step 4/5. Functionally, reversibly transfers an adenylyl group from ATP to 4'-phosphopantetheine, yielding dephospho-CoA (dPCoA) and pyrophosphate. This is Phosphopantetheine adenylyltransferase from Stenotrophomonas maltophilia (strain K279a).